A 141-amino-acid chain; its full sequence is PBKALITGFWSKVKVBZVGAZALGRLLVVYPWTZRFFZHFGBLSSABAVMBBAKVKAHGKKVLBSFSBGLKHLBBLKGAFASLSZLHCBKLHVBPZBFRLLGBVLVVVLARHFGKZFBPZLZAZFZKVVAGVASALAHRYH.

The 141-residue stretch at proline 1–histidine 141 folds into the Globin domain. Heme b contacts are provided by histidine 58 and histidine 87.

This sequence belongs to the globin family. As to quaternary structure, heterotetramer of two alpha chains and two beta chains. In terms of tissue distribution, red blood cells.

Involved in oxygen transport from the lung to the various peripheral tissues. The chain is Hemoglobin subunit beta-C(NA) from Ammotragus lervia (Barbary sheep).